The following is a 157-amino-acid chain: Mediator of RNA polymerase II transcription subunit 10 (157 aa).

Belongs to the Mediator complex subunit 10 family. As to quaternary structure, component of the Mediator complex, which is composed of at least 21 subunits that form three structurally distinct submodules. The Mediator head module contains MED6, MED8, MED11, SRB4/MED17, SRB5/MED18, ROX3/MED19, SRB2/MED20 and SRB6/MED22, the middle module contains MED1, MED4, NUT1/MED5, MED7, CSE2/MED9, NUT2/MED10, SRB7/MED21 and SOH1/MED31, and the tail module contains MED2, PGD1/MED3, RGR1/MED14, GAL11/MED15 and SIN4/MED16. The head and the middle modules interact directly with RNA polymerase II, whereas the elongated tail module interacts with gene-specific regulatory proteins. NUT2/MED10 interacts directly with SRB7/MED21.

Its subcellular location is the nucleus. Functionally, component of the Mediator complex, a coactivator involved in the regulated transcription of nearly all RNA polymerase II-dependent genes. Mediator functions as a bridge to convey information from gene-specific regulatory proteins to the basal RNA polymerase II transcription machinery. The Mediator complex, having a compact conformation in its free form, is recruited to promoters by direct interactions with regulatory proteins and serves for the assembly of a functional preinitiation complex with RNA polymerase II and the general transcription factors. The Mediator complex unfolds to an extended conformation and partially surrounds RNA polymerase II, specifically interacting with the unphosphorylated form of the C-terminal domain (CTD) of RNA polymerase II. The Mediator complex dissociates from the RNA polymerase II holoenzyme and stays at the promoter when transcriptional elongation begins. This is Mediator of RNA polymerase II transcription subunit 10 (NUT2) from Saccharomyces cerevisiae (strain ATCC 204508 / S288c) (Baker's yeast).